Here is a 652-residue protein sequence, read N- to C-terminus: 2',3'-cyclic-nucleotide 2'-phosphodiesterase/3'-nucleotidase (652 aa).

Positions 1–24 (MFKRPLTLSLLASLIALTTSTAQA) are cleaved as a signal peptide. 7 residues coordinate a divalent metal cation: aspartate 36, histidine 38, aspartate 81, asparagine 121, histidine 230, histidine 262, and histidine 264. Substrate contacts are provided by residues tyrosine 445 and 549-555 (YRAYSGK).

It belongs to the 5'-nucleotidase family. A divalent metal cation is required as a cofactor.

The protein localises to the periplasm. It catalyses the reaction a nucleoside 2',3'-cyclic phosphate + H2O = a nucleoside 3'-phosphate + H(+). It carries out the reaction a ribonucleoside 3'-phosphate + H2O = a ribonucleoside + phosphate. In terms of biological role, this bifunctional enzyme catalyzes two consecutive reactions during ribonucleic acid degradation. Converts a 2',3'-cyclic nucleotide to a 3'-nucleotide and then the 3'-nucleotide to the corresponding nucleoside and phosphate. The chain is 2',3'-cyclic-nucleotide 2'-phosphodiesterase/3'-nucleotidase (cpdB) from Yersinia enterocolitica.